The following is a 132-amino-acid chain: MTMTDPVADMLTRLRNANSAYHDTVSMPYSKLKARIAEILKAEGYIADWSEEPARVGKTLTLSLKFGSNRERSIAGVRRISKPGLRVYAKSTNLPRVFGGLGIAILSTSSGLLTDKQAGKKGVGGEVLAYVW.

This sequence belongs to the universal ribosomal protein uS8 family. As to quaternary structure, part of the 30S ribosomal subunit. Contacts proteins S5 and S12.

Its function is as follows. One of the primary rRNA binding proteins, it binds directly to 16S rRNA central domain where it helps coordinate assembly of the platform of the 30S subunit. The polypeptide is Small ribosomal subunit protein uS8 (Kocuria rhizophila (strain ATCC 9341 / DSM 348 / NBRC 103217 / DC2201)).